The sequence spans 146 residues: Acetyl-CoA decarbonylase/synthase complex subunit epsilon (146 aa).

Belongs to the CdhB family. As to quaternary structure, heterotetramer of two alpha and two epsilon subunits. The ACDS complex is made up of alpha, epsilon, beta, gamma and delta subunits with a probable stoichiometry of (alpha(2)epsilon(2))(4)-beta(8)-(gamma(1)delta(1))(8).

Its function is as follows. Part of a complex that catalyzes the reversible cleavage of acetyl-CoA, allowing autotrophic growth from CO(2). The alpha-epsilon subcomponent functions as a carbon monoxide dehydrogenase. The precise role of the epsilon subunit is unclear; it may have a stabilizing role within the alpha(2)epsilon(2) component and/or be involved in electron transfer to FAD during a potential FAD-mediated CO oxidation. The protein is Acetyl-CoA decarbonylase/synthase complex subunit epsilon of Methanocaldococcus jannaschii (strain ATCC 43067 / DSM 2661 / JAL-1 / JCM 10045 / NBRC 100440) (Methanococcus jannaschii).